The following is an 872-amino-acid chain: MSEVPDSYDPDEAEQKWRDEWLESDVYSYDGDEERPDYIIDTPPPYPTGNLHIGNALGWCYMDYAARYHRLQGDDVLFPQGWDCHGLPTEVKVEENRDIHRTDVSREQFREWCVEHTDEQIAAMKETMRTLGFSQDWDHEFRTMDDSYWQETQRSFLQMADSDYVYQDEHPVNWCPRCETAIADAEVENEDREGTLYYITFSGADNDDIEIATTRPELLPACVAIAVDPDDDRFEGRVGDRFEVPIFGQEVELIADDDVDGDFGTGAVMICTFGDKQDVDWWAEHDLDLRPVVTEDGHLNERAGEFEGRSIDEAKDEIATALSKSGHLHKEEPTEQSVGCCWRCDTPIEILSKEQWFVKVDQEEILETAQDIAWYPDHMYERLEEWTEGMEWDWVISRQRVFATPIPAWECADCGHIELADESEVPVDPTNDEPAVGSCPECGSDDWVGETDVMDTWMDSSISPLYVAGWPDETFEPVQLREQGHDIIRTWAFYTILRTAAVTDEIPWEEALINGMVFGDDGNKMSKSRGNFVQPEEVVEEHSADAFRQAMALGGQPGSDIQFQWKEVTSASRFQTKLWNITKFASEHIDESTPDIEAPAYRDADEWILARCARVADEVADDMDEYRFDSALRTVREFVWHDLADDYLELIKGRLYEGRPGERKAAEHALFVSLSASLRMLSPFAPFITEEAWSHLPADGSVHNAAWPDPPAGDEAAEERGELIAEVAATIRGWKSDEGKPLNADLERVEVYIDEDRPLDTYDLADTVNGPVYIEEGTPSVELVPVGVDIEHSELGPVFRDKAGEVVGRLESADPAELQAELDTDGHVEFEVDGETVTVEPEMFDIVEEQRAESGEEVVVLEADDATVLVFE.

A 'HIGH' region motif is present at residues 45–55 (PYPTGNLHIGN). The 'KMSKS' region signature appears at 524–528 (KMSKS). Lys-527 provides a ligand contact to ATP.

This sequence belongs to the class-I aminoacyl-tRNA synthetase family. ValS type 2 subfamily.

Its subcellular location is the cytoplasm. It catalyses the reaction tRNA(Val) + L-valine + ATP = L-valyl-tRNA(Val) + AMP + diphosphate. Catalyzes the attachment of valine to tRNA(Val). As ValRS can inadvertently accommodate and process structurally similar amino acids such as threonine, to avoid such errors, it has a 'posttransfer' editing activity that hydrolyzes mischarged Thr-tRNA(Val) in a tRNA-dependent manner. The protein is Valine--tRNA ligase of Natronomonas pharaonis (strain ATCC 35678 / DSM 2160 / CIP 103997 / JCM 8858 / NBRC 14720 / NCIMB 2260 / Gabara) (Halobacterium pharaonis).